A 276-amino-acid polypeptide reads, in one-letter code: 2,3,4,5-tetrahydropyridine-2,6-dicarboxylate N-succinyltransferase (276 aa).

Positions 104 and 141 each coordinate substrate.

Belongs to the transferase hexapeptide repeat family. As to quaternary structure, homotrimer.

The protein resides in the cytoplasm. The catalysed reaction is (S)-2,3,4,5-tetrahydrodipicolinate + succinyl-CoA + H2O = (S)-2-succinylamino-6-oxoheptanedioate + CoA. Its pathway is amino-acid biosynthesis; L-lysine biosynthesis via DAP pathway; LL-2,6-diaminopimelate from (S)-tetrahydrodipicolinate (succinylase route): step 1/3. This Legionella pneumophila (strain Paris) protein is 2,3,4,5-tetrahydropyridine-2,6-dicarboxylate N-succinyltransferase.